The primary structure comprises 40 residues: SDPKIGNGCFGFPIDRIGSVSGLGCNRLVQNPPKPISGES.

The cysteines at positions 9 and 25 are disulfide-linked.

The protein belongs to the natriuretic peptide family. Expressed by the venom gland.

The protein resides in the secreted. In terms of biological role, snake venom natriuretic peptide that exhibits vasoactive and hypotensive activity. Stimulates cGMP production through the natriuretic peptide receptor 1 (NPR1) with very high potencies for the rat NPR1 (EC(50)=18 nM), and very weak potencies over human NPR1 (30% activation at 10 uM). This is Natriuretic peptide TNPd from Oxyuranus microlepidotus (Inland taipan).